Consider the following 113-residue polypeptide: Large ribosomal subunit protein bL17 (113 aa).

It belongs to the bacterial ribosomal protein bL17 family. Part of the 50S ribosomal subunit. Contacts protein L32.

The polypeptide is Large ribosomal subunit protein bL17 (Alkaliphilus metalliredigens (strain QYMF)).